Reading from the N-terminus, the 550-residue chain is CTP synthase (550 aa).

The interval 1–270 (MTKFVFVTGG…DRLICEELRL (270 aa)) is amidoligase domain. S13 is a binding site for CTP. S13 contributes to the UTP binding site. Residues 14 to 19 (SLGKGI) and D71 contribute to the ATP site. D71 and E144 together coordinate Mg(2+). CTP-binding positions include 151–153 (DIE), 191–196 (KTKPTQ), and K227. UTP is bound by residues 191 to 196 (KTKPTQ) and K227. The Glutamine amidotransferase type-1 domain occupies 295–547 (TIGMVGKYVD…VEAALASQQR (253 aa)). Residue G356 participates in L-glutamine binding. The active-site Nucleophile; for glutamine hydrolysis is the C383. L-glutamine is bound by residues 384–387 (LGMQ), E407, and R473. Residues H520 and E522 contribute to the active site.

It belongs to the CTP synthase family. In terms of assembly, homotetramer.

It catalyses the reaction UTP + L-glutamine + ATP + H2O = CTP + L-glutamate + ADP + phosphate + 2 H(+). It carries out the reaction L-glutamine + H2O = L-glutamate + NH4(+). The enzyme catalyses UTP + NH4(+) + ATP = CTP + ADP + phosphate + 2 H(+). Its pathway is pyrimidine metabolism; CTP biosynthesis via de novo pathway; CTP from UDP: step 2/2. Allosterically activated by GTP, when glutamine is the substrate; GTP has no effect on the reaction when ammonia is the substrate. The allosteric effector GTP functions by stabilizing the protein conformation that binds the tetrahedral intermediate(s) formed during glutamine hydrolysis. Inhibited by the product CTP, via allosteric rather than competitive inhibition. Its function is as follows. Catalyzes the ATP-dependent amination of UTP to CTP with either L-glutamine or ammonia as the source of nitrogen. Regulates intracellular CTP levels through interactions with the four ribonucleotide triphosphates. The chain is CTP synthase from Cupriavidus taiwanensis (strain DSM 17343 / BCRC 17206 / CCUG 44338 / CIP 107171 / LMG 19424 / R1) (Ralstonia taiwanensis (strain LMG 19424)).